Here is a 460-residue protein sequence, read N- to C-terminus: Putative protein p41 (460 aa).

In terms of domain architecture, Helicase ATP-binding spans 14 to 186 (INHLLDIKRS…WGQAWFVDQG (173 aa)).

The protein is Putative protein p41 (41) of Escherichia coli (Bacteriophage APSE-1).